Consider the following 537-residue polypeptide: CTP synthase (537 aa).

The interval 1–268 is amidoligase domain; the sequence is MPFKCIFLTG…STFITEKLGL (268 aa). CTP is bound at residue serine 14. Serine 14 lines the UTP pocket. 15–20 serves as a coordination point for ATP; sequence SLGKGL. Tyrosine 55 contributes to the L-glutamine binding site. Residue aspartate 72 participates in ATP binding. Positions 72 and 142 each coordinate Mg(2+). Residues 149–151, 188–193, and lysine 224 contribute to the CTP site; these read DIE and KTKPTQ. UTP is bound by residues 188–193 and lysine 224; that span reads KTKPTQ. The 240-residue stretch at 294–533 folds into the Glutamine amidotransferase type-1 domain; it reads RIGLVGKYVQ…IQAALLYSKN (240 aa). Glycine 353 lines the L-glutamine pocket. The active-site Nucleophile; for glutamine hydrolysis is cysteine 380. L-glutamine is bound by residues 381 to 384, glutamate 404, and arginine 461; that span reads LGMQ. Active-site residues include histidine 506 and glutamate 508.

This sequence belongs to the CTP synthase family. As to quaternary structure, homotetramer.

It carries out the reaction UTP + L-glutamine + ATP + H2O = CTP + L-glutamate + ADP + phosphate + 2 H(+). It catalyses the reaction L-glutamine + H2O = L-glutamate + NH4(+). The enzyme catalyses UTP + NH4(+) + ATP = CTP + ADP + phosphate + 2 H(+). It participates in pyrimidine metabolism; CTP biosynthesis via de novo pathway; CTP from UDP: step 2/2. With respect to regulation, allosterically activated by GTP, when glutamine is the substrate; GTP has no effect on the reaction when ammonia is the substrate. The allosteric effector GTP functions by stabilizing the protein conformation that binds the tetrahedral intermediate(s) formed during glutamine hydrolysis. Inhibited by the product CTP, via allosteric rather than competitive inhibition. In terms of biological role, catalyzes the ATP-dependent amination of UTP to CTP with either L-glutamine or ammonia as the source of nitrogen. Regulates intracellular CTP levels through interactions with the four ribonucleotide triphosphates. This Chlamydia caviae (strain ATCC VR-813 / DSM 19441 / 03DC25 / GPIC) (Chlamydophila caviae) protein is CTP synthase.